Here is an 84-residue protein sequence, read N- to C-terminus: Putative membrane protein insertion efficiency factor (84 aa).

This sequence belongs to the UPF0161 family.

Its subcellular location is the cell inner membrane. In terms of biological role, could be involved in insertion of integral membrane proteins into the membrane. This Acidiphilium cryptum (strain JF-5) protein is Putative membrane protein insertion efficiency factor.